A 1021-amino-acid polypeptide reads, in one-letter code: Sodium/potassium-transporting ATPase subunit alpha-1 (1021 aa).

A propeptide spanning residues 1–5 (MGKGA) is cleaved from the precursor. Residues 1-11 (MGKGAGRDKYE) are compositionally biased toward basic and acidic residues. Residues 1 to 31 (MGKGAGRDKYEPTATSEHGTKKKKAKERDMD) are disordered. Topologically, residues 6 to 85 (GRDKYEPTAT…NTLTPPPTTP (80 aa)) are cytoplasmic. Tyr10 carries the post-translational modification Phosphotyrosine. Ser16 is subject to Phosphoserine; by PKC. Positions 80-82 (PPP) are phosphoinositide-3 kinase binding. The chain crosses the membrane as a helical span at residues 86–106 (EWVKFCRQLFGGFSLLLWIGS). The Extracellular portion of the chain corresponds to 107–129 (LLCFLAYGITSVMEGEPNSDNLY). A helical membrane pass occupies residues 130-150 (LGVVLAAVVIITGCFSYYQEA). The Cytoplasmic segment spans residues 151–286 (KSSKIMESFK…GGKTPIAMEI (136 aa)). Positions 214–233 (SSLTGESEPQTRSPDFSNEN) are disordered. A helical membrane pass occupies residues 287–306 (EHFIHLITGVAVFLGVSFFI). The Extracellular segment spans residues 307-318 (LSLILEYTWLEA). A helical transmembrane segment spans residues 319 to 336 (VIFLIGIIVANVPEGLLA). Residues 337 to 770 (TVTVCLTLTA…EEGRLIFDNL (434 aa)) lie on the Cytoplasmic side of the membrane. The active-site 4-aspartylphosphate intermediate is Asp374. An ATP-binding site is contributed by Lys485. The Mg(2+) site is built by Asp715 and Asp719. The chain crosses the membrane as a helical span at residues 771–790 (KKSIAYTLTSNIPEITPFLI). Residues 791–800 (FIIANIPLPL) are Extracellular-facing. A helical transmembrane segment spans residues 801 to 821 (GTCTILCIDLGTDMVPAISLA). The Cytoplasmic segment spans residues 822–841 (YEQAESDIMKRQPRNPKTDK). A helical membrane pass occupies residues 842–864 (LVNERLISMAYGQIGMIQALGGF). Over 865-916 (FTYFVIMAENGFLPSGLVGIRLQWDDRWINDVEDSYGQQWTFEQRKIVEFTC) the chain is Extracellular. The helical transmembrane segment at 917-936 (HTAFFVSIVVVQWADLIICK) threads the bilayer. Topologically, residues 937 to 949 (TRRNSVFQQGMKN) are cytoplasmic. A Phosphoserine; by PKA modification is found at Ser941. Residues 950 to 968 (KILIFGLFEETALAAFLSY) traverse the membrane as a helical segment. The Extracellular segment spans residues 969–983 (CPGMDVALRMYPLKP). Residues 984 to 1004 (TWWFCAFPYSLLIFLYDEIRK) form a helical membrane-spanning segment. The Cytoplasmic segment spans residues 1005 to 1021 (LIIRRNPGGWVERETYY).

This sequence belongs to the cation transport ATPase (P-type) (TC 3.A.3) family. Type IIC subfamily. As to quaternary structure, the sodium/potassium-transporting ATPase is composed of a catalytic alpha subunit, an auxiliary non-catalytic beta subunit and an additional regulatory subunit. In terms of processing, phosphorylation on Tyr-10 modulates pumping activity.

It localises to the cell membrane. The protein localises to the sarcolemma. The catalysed reaction is K(+)(out) + Na(+)(in) + ATP + H2O = K(+)(in) + Na(+)(out) + ADP + phosphate + H(+). In terms of biological role, this is the catalytic component of the active enzyme, which catalyzes the hydrolysis of ATP coupled with the exchange of sodium and potassium ions across the plasma membrane. This action creates the electrochemical gradient of sodium and potassium ions, providing the energy for active transport of various nutrients. The sequence is that of Sodium/potassium-transporting ATPase subunit alpha-1 (ATP1A1) from Gallus gallus (Chicken).